A 704-amino-acid polypeptide reads, in one-letter code: Elongation factor G 1 (704 aa).

In terms of domain architecture, tr-type G spans 8–291 (ERYRNIGISA…AVIDYLPSPA (284 aa)). Residues 17 to 24 (AHIDAGKT), 88 to 92 (DTPGH), and 142 to 145 (NKMD) contribute to the GTP site.

It belongs to the TRAFAC class translation factor GTPase superfamily. Classic translation factor GTPase family. EF-G/EF-2 subfamily.

It localises to the cytoplasm. Functionally, catalyzes the GTP-dependent ribosomal translocation step during translation elongation. During this step, the ribosome changes from the pre-translocational (PRE) to the post-translocational (POST) state as the newly formed A-site-bound peptidyl-tRNA and P-site-bound deacylated tRNA move to the P and E sites, respectively. Catalyzes the coordinated movement of the two tRNA molecules, the mRNA and conformational changes in the ribosome. In Burkholderia pseudomallei (strain 1710b), this protein is Elongation factor G 1.